A 146-amino-acid chain; its full sequence is Meiotically up-regulated gene 96 protein (146 aa).

Residues 85 to 104 (LIRYSLILTCLVAILLSVLW) form a helical membrane-spanning segment.

It localises to the cytoplasm. Its subcellular location is the membrane. Its function is as follows. Has a role in meiosis. This Schizosaccharomyces pombe (strain 972 / ATCC 24843) (Fission yeast) protein is Meiotically up-regulated gene 96 protein (mug96).